Reading from the N-terminus, the 192-residue chain is UPF0301 protein Bcen_0382 (192 aa).

This sequence belongs to the UPF0301 (AlgH) family.

This chain is UPF0301 protein Bcen_0382, found in Burkholderia orbicola (strain AU 1054).